Reading from the N-terminus, the 121-residue chain is Large ribosomal subunit protein uL14 (121 aa).

The protein belongs to the universal ribosomal protein uL14 family. As to quaternary structure, part of the 50S ribosomal subunit. Forms a cluster with proteins L3 and L19. In the 70S ribosome, L14 and L19 interact and together make contacts with the 16S rRNA in bridges B5 and B8.

In terms of biological role, binds to 23S rRNA. Forms part of two intersubunit bridges in the 70S ribosome. This is Large ribosomal subunit protein uL14 from Azobacteroides pseudotrichonymphae genomovar. CFP2.